Consider the following 132-residue polypeptide: uncharacterized protein (132 aa).

The N-terminal stretch at 1–19 (MKKALFLVGLVFTAGVISS) is a signal peptide. A lipid anchor (N-palmitoyl cysteine) is attached at Cys-20. Cys-20 carries the S-diacylglycerol cysteine lipid modification.

The protein resides in the cell membrane. This is an uncharacterized protein from Aquifex aeolicus (strain VF5).